The following is a 112-amino-acid chain: Large ribosomal subunit protein eL30 (112 aa).

This sequence belongs to the eukaryotic ribosomal protein eL30 family. Expressed in roots and leaves.

The protein is Large ribosomal subunit protein eL30 of Triticum aestivum (Wheat).